Consider the following 145-residue polypeptide: Brain and acute leukemia cytoplasmic protein (145 aa).

A lipid anchor (N-myristoyl glycine) is attached at Gly-2. The S-palmitoyl cysteine moiety is linked to residue Cys-3. An interaction with CAMK2A region spans residues Cys-3–Ala-35. The interval Leu-36 to Asp-113 is disordered. Residues Cys-83–Trp-106 are compositionally biased toward polar residues.

Interacts with CAMK2A. Post-translationally, palmitoylation and myristoylation target the protein to the lipid rafts. As to expression, predominantly expressed in the brain (at protein level). Within the brain, found in most of forebrain structures, including the cerebral cortex, hippocampal formation, olfactory bulb, anterior olfactory nuclei, piriform cortex, tenia tecta and amygdaloid nuclei. Not detected in glial cells.

Its subcellular location is the cytoplasm. The protein localises to the synapse. The protein resides in the synaptosome. It is found in the membrane raft. It localises to the postsynaptic density. May play a synaptic role at the postsynaptic lipid rafts possibly through interaction with CAMK2A. This is Brain and acute leukemia cytoplasmic protein (Baalc) from Rattus norvegicus (Rat).